The following is a 395-amino-acid chain: Phosphoprotein (395 aa).

Disordered stretches follow at residues 31–109 (VETV…DTQL) and 126–214 (NKSS…PASV). Residues 65–74 (TPDRQNRSDK) are compositionally biased toward basic and acidic residues. 3 stretches are compositionally biased toward polar residues: residues 75 to 98 (QPST…QPPT), 146 to 168 (LPTQ…QNRA), and 203 to 212 (SGQSQDNTPA). A multimerization region spans residues 222–285 (DFVQAMMSMM…LGMMKILDPG (64 aa)).

The protein belongs to the rubulavirus/avulavirus P protein family. Homotetramer. Interacts (via multimerization domain) with polymerase L; this interaction forms the polymerase L-P complex. Interacts (via N-terminus) with N0 (via Ncore); this interaction allows P to chaperon N0 to avoid N polymerization before encapsidation. Interacts (via C-terminus) with N-RNA template; this interaction positions the polymerase on the template for both transcription and replication.

Essential cofactor of the RNA polymerase L that plays a central role in the transcription and replication by forming the polymerase complex with RNA polymerase L and recruiting L to the genomic N-RNA template for RNA synthesis. Also plays a central role in the encapsidation of nascent RNA chains by forming the encapsidation complex with the nucleocapsid protein N (N-P complex). Acts as a chaperone for newly synthesized free N protein, so-called N0, allowing encapsidation of nascent RNA chains during replication. The nucleoprotein protein N prevents excessive phosphorylation of P, which leads to down-regulation of viral transcription/ replication. Participates, together with N, in the formation of viral factories (viroplasms), which are large inclusions in the host cytoplasm where replication takes place. This is Phosphoprotein (P/C) from Gallus gallus (Chicken).